Reading from the N-terminus, the 435-residue chain is MWAPPAAIMGDGPTKKVGNQAPLQTQALQTASLRDGPAKRAVWVRHTSSEPQEPTESKAAKERPKQEVTKAVVVDLGTGYCKCGFAGLPRPTHKISTTVGKPYMETAKTGDNRKETFVGQELNNTNVHLKLVNPLRHGIIVDWDTVQDIWEYLFRQEMKIAPEEHAVLVSDPPLSPHTNREKYAEMLFEAFNTPAMHIAYQSRLSMYSYGRTSGLVVEVGHGVSYVVPIYEGYPLPSITGRLDYAGSDLTAYLLGLLNSAGNEFTQDQMGIVEDIKKKCCFVALDPIEEKKVPLSEHTIRYVLPDGKEIQLCQERFLCSEMFFKPSLIKSMQLGLHTQTVSCLNKCDIALKRDLMGNILLCGGSTMLSGFPNRLQKELSSMCPNDTPQVNVLPERDSAVWTGGSILASLQGFQPLWVHRFEYEEHGPFFLYRRCF.

The disordered stretch occupies residues 1-64 (MWAPPAAIMG…TESKAAKERP (64 aa)). A compositionally biased stretch (low complexity) spans 20–31 (QAPLQTQALQTA). The tract at residues 31-51 (ASLRDGPAKRAVWVRHTSSEP) is required for interaction with TES. The span at 55 to 64 (TESKAAKERP) shows a compositional bias: basic and acidic residues.

This sequence belongs to the actin family. Interacts (via N-terminus) with TES (via LIM domain 2). Heterodimer with TES; the heterodimer interacts with ENAH to form a heterotrimer. Interacts with ACTL9. Interacts with CYLC1; the interaction may be relevant for proper acrosome attachment to the nuclear envelope. In terms of tissue distribution, strongly expressed in testis. Also expressed in other tissues.

It localises to the cytoplasm. Its subcellular location is the cytoskeleton. The protein localises to the golgi apparatus. The protein resides in the nucleus. It is found in the cytoplasmic vesicle. It localises to the secretory vesicle. Its subcellular location is the acrosome. Essential for normal spermatogenesis and male fertility. Required for normal sperm head morphology, acroplaxome formation, acrosome attachment, and acrosome granule stability. May anchor and stabilize acrosomal adherence to the acroplaxome at least in part by facilitating the presence of F-actin in the subacrosomal space. May play an important role in formation and fusion of Golgi-derived vesicles during acrosome biogenesis. The polypeptide is Actin-like protein 7A (ACTL7A) (Homo sapiens (Human)).